The chain runs to 572 residues: NADH-ubiquinone oxidoreductase chain 5 (572 aa).

16 consecutive transmembrane segments (helical) span residues 4–24 (ISFV…LYFL), 44–64 (IVMT…VLMI), 86–106 (IMLV…PNLI), 107–127 (SILL…IYFQ), 147–167 (VALL…YIFY), 170–190 (IMQN…AAMT), 217–237 (SSTL…ILST), 239–259 (WLGQ…GLGA), 268–288 (IIAL…SMGF), 294–314 (FHLL…GAII), 337–357 (SACF…AGFY), 372–394 (NMFS…FRLV), 422–442 (MGLL…IFPF), 457–477 (LFVC…NLFF), 490–510 (FLGS…FYPL), and 552–572 (LKIY…LLFL).

Belongs to the complex I subunit 5 family.

Its subcellular location is the mitochondrion inner membrane. It carries out the reaction a ubiquinone + NADH + 5 H(+)(in) = a ubiquinol + NAD(+) + 4 H(+)(out). Its function is as follows. Core subunit of the mitochondrial membrane respiratory chain NADH dehydrogenase (Complex I) that is believed to belong to the minimal assembly required for catalysis. Complex I functions in the transfer of electrons from NADH to the respiratory chain. The immediate electron acceptor for the enzyme is believed to be ubiquinone. This Drosophila melanogaster (Fruit fly) protein is NADH-ubiquinone oxidoreductase chain 5 (mt:ND5).